The primary structure comprises 183 residues: uncharacterized protein (183 aa).

Positions 105–149 (YNTNNSNTNTNYNNNNNNNNNNNNNNNNNNNKNNNNNNNNNNSNS) are enriched in low complexity. The disordered stretch occupies residues 105-151 (YNTNNSNTNTNYNNNNNNNNNNNNNNNNNNNKNNNNNNNNNNSNSKI).

This is an uncharacterized protein from Dictyostelium discoideum (Social amoeba).